We begin with the raw amino-acid sequence, 310 residues long: Prostate androgen-regulated mucin-like protein 1 homolog (310 aa).

The first 20 residues, 1–20 (MVYKTLFALCILTAGWRVQS), serve as a signal peptide directing secretion. The Extracellular segment spans residues 21–258 (LPTSAPLSVS…EVEHALSSGS (238 aa)). Positions 40-74 (TIWTSSPQNTDADTASPSNGTHNNSVLPVTASAPT) are enriched in polar residues. A disordered region spans residues 40–224 (TIWTSSPQNT…VPQEKTPPTT (185 aa)). Asn58, Asn62, and Asn80 each carry an N-linked (GlcNAc...) asparagine glycan. Residues 92–103 (SPGSNWEGTNTD) show a composition bias toward polar residues. Positions 150–209 (SPQAPASSPSSLSTSPPEVFSVSVTTNHSSTVTSTQPTGAPTAPESPTEESSSDHTPTSH) are enriched in low complexity. Asn176 is a glycosylation site (N-linked (GlcNAc...) asparagine). Residues 259–279 (IAAITVTVIAVVLLVFGVAAY) form a helical membrane-spanning segment. Residues 280–310 (LKIRHSSYGRLLDDHDYGSWGNYNNPLYDDS) lie on the Cytoplasmic side of the membrane. Ser298 carries the phosphoserine modification.

This sequence belongs to the PARM family. Post-translationally, highly N-glycosylated and O-glycosylated.

The protein resides in the cell membrane. The protein localises to the golgi apparatus membrane. Its subcellular location is the endosome membrane. In terms of biological role, may regulate TLP1 expression and telomerase activity, thus enabling certain prostatic cells to resist apoptosis. This Pongo abelii (Sumatran orangutan) protein is Prostate androgen-regulated mucin-like protein 1 homolog (PARM1).